We begin with the raw amino-acid sequence, 455 residues long: F-box/FBD/LRR-repeat protein At3g51530 (455 aa).

Residues 1–26 (MKNSERFSAAKPLMEQGGKSSRKPGF) are disordered. Positions 29–75 (EDRISELPEVLLLQILSSLPTKLVISTSVLSKRWLSLWKMVQRLEFE) constitute an F-box domain. LRR repeat units follow at residues 80–106 (IYDF…HLKV), 155–182 (ETLK…HLLS), 183–208 (VVYK…VLRR), 227–257 (TLLL…GIES), 277–302 (IRNV…SLDL), and 325–351 (THKV…KLID). The FBD domain occupies 370-417 (KWNQPKYVPECLETFMWRNCNWGREEEKEVATYILRNARQLKKATFST).

The protein is F-box/FBD/LRR-repeat protein At3g51530 of Arabidopsis thaliana (Mouse-ear cress).